We begin with the raw amino-acid sequence, 352 residues long: tRNA pseudouridine synthase D (352 aa).

Catalysis depends on D81, which acts as the Nucleophile. A TRUD domain is found at 157–303 (GVPNYFGLQR…MAHERRILRL (147 aa)).

Belongs to the pseudouridine synthase TruD family.

The catalysed reaction is uridine(13) in tRNA = pseudouridine(13) in tRNA. In terms of biological role, responsible for synthesis of pseudouridine from uracil-13 in transfer RNAs. This Ectopseudomonas mendocina (strain ymp) (Pseudomonas mendocina) protein is tRNA pseudouridine synthase D.